The sequence spans 297 residues: Pantothenate synthetase (297 aa).

30–37 (MGYLHAGH) is an ATP binding site. Histidine 37 functions as the Proton donor in the catalytic mechanism. Glutamine 61 is a (R)-pantoate binding site. Glutamine 61 provides a ligand contact to beta-alanine. 147–150 (GEKD) is a binding site for ATP. Glutamine 153 contributes to the (R)-pantoate binding site. Residues valine 176 and 184 to 187 (LSSR) each bind ATP.

This sequence belongs to the pantothenate synthetase family. In terms of assembly, homodimer.

The protein resides in the cytoplasm. It carries out the reaction (R)-pantoate + beta-alanine + ATP = (R)-pantothenate + AMP + diphosphate + H(+). The protein operates within cofactor biosynthesis; (R)-pantothenate biosynthesis; (R)-pantothenate from (R)-pantoate and beta-alanine: step 1/1. Catalyzes the condensation of pantoate with beta-alanine in an ATP-dependent reaction via a pantoyl-adenylate intermediate. This chain is Pantothenate synthetase, found in Rhizobium etli (strain ATCC 51251 / DSM 11541 / JCM 21823 / NBRC 15573 / CFN 42).